Here is a 111-residue protein sequence, read N- to C-terminus: Iron-sulfur cluster assembly protein CyaY (111 aa).

The protein belongs to the frataxin family.

In terms of biological role, involved in iron-sulfur (Fe-S) cluster assembly. May act as a regulator of Fe-S biogenesis. The sequence is that of Iron-sulfur cluster assembly protein CyaY from Cupriavidus necator (strain ATCC 17699 / DSM 428 / KCTC 22496 / NCIMB 10442 / H16 / Stanier 337) (Ralstonia eutropha).